The sequence spans 505 residues: Adenylosuccinate synthetase, chloroplastic (505 aa).

Residues 1–60 constitute a chloroplast transit peptide; it reads MTTMNISTLRLDSNPITTSTKSTTHRSGALGYNGSYSCRLLQFQKKNKAPSIIVCSTKPL. Residues 92-98 and 120-122 each bind GTP; these read GDEGKGK and GHT. The active-site Proton acceptor is the D93. Positions 93 and 120 each coordinate Mg(2+). IMP-binding positions include 93–96, 118–121, T210, R224, Q304, T319, and R383; these read DEGK and NAGH. The Proton donor role is filled by H121. Substrate is bound at residue 379–385; it reads TTTGRPR. Residues R385, 411–413, and 494–496 contribute to the GTP site; these read KLD and GVG.

The protein belongs to the adenylosuccinate synthetase family. In terms of assembly, homodimer. It depends on Mg(2+) as a cofactor.

The protein resides in the plastid. Its subcellular location is the chloroplast. The catalysed reaction is IMP + L-aspartate + GTP = N(6)-(1,2-dicarboxyethyl)-AMP + GDP + phosphate + 2 H(+). It participates in purine metabolism; AMP biosynthesis via de novo pathway; AMP from IMP: step 1/2. Plays an important role in the de novo pathway and in the salvage pathway of purine nucleotide biosynthesis. Catalyzes the first committed step in the biosynthesis of AMP from IMP. The protein is Adenylosuccinate synthetase, chloroplastic of Nicotiana tabacum (Common tobacco).